A 74-amino-acid chain; its full sequence is Acyclotide phyb-K (74 aa).

Residues 1–24 (MARVNSLKCALCFIVLILFVQLNC) form the signal peptide. The propeptide occupies 25-43 (IPETRVMAVELSRVFLQTS). Cystine bridges form between Cys-47/Cys-64, Cys-51/Cys-66, and Cys-56/Cys-71.

Post-translationally, contains 3 disulfide bonds. As to expression, expressed in midvein, lamina and periphery of leaves (at protein level).

Its function is as follows. Probably participates in a plant defense mechanism. This is Acyclotide phyb-K from Petunia hybrida (Petunia).